We begin with the raw amino-acid sequence, 661 residues long: MSHSVSLTFPDGSVREFAAGTTGRDVAESISKSLAKKAVAIALDGELRDLSDPIADGKIEIVTREDKRALELIRHDAAHVMAEAVQELWPGTQVTIGPVIDNGFYYDFAKNEPFTPDDLPVIEKKMKEIIARNNPFSKEVWSRDKAKEVFAAKGESYKVELVDAIPEGQDLKIYYQGDWFDLCRGPHMASTGQIGTAFKLMKVAGAYWRGDSNNPMLTRIYGTAWHTQEELDQYLHVLAEAEKRDHRRLGREMDLFHFQEEGPGVVFWHGKGWRVFQSLVAYMRRRLEVDYQEVNAPQVLDKSLWETSGHWGWYRDNMFKVTVAGDETDDDRVFALKPMNCPGHIQIFKHGLKSYRELPVRMAEFGAVHRYEPSGALHGLMRVRGFTQDDAHIFCTDEQMAAECLKINDLILSVYEDFGFKEIVVKLSTRPDKRVGSDALWDRAEAVMTDVLNTIEAQSEGRIKTGILPGEGAFYGPKFEYTLKDAIGREWQCGTTQVDFNLPERFGAFYIDKDSEKRQPVMIHRAICGSMERFLGILLENYAGHMPLWISPLQVVVATITSDADDYGREVAARLREAGLTVETDFRNEKINYKIREHSVTKVPVIVVCGKREAEERSVNIRRLGSQAQTAMSLEEAVAALSSEAMAPDLKRKMERSARAA.

The region spanning 1–64 (MSHSVSLTFP…ADGKIEIVTR (64 aa)) is the TGS domain. The tract at residues 245–547 (DHRRLGREMD…LLENYAGHMP (303 aa)) is catalytic. Zn(2+)-binding residues include cysteine 341, histidine 392, and histidine 524.

Belongs to the class-II aminoacyl-tRNA synthetase family. In terms of assembly, homodimer. The cofactor is Zn(2+).

It localises to the cytoplasm. The enzyme catalyses tRNA(Thr) + L-threonine + ATP = L-threonyl-tRNA(Thr) + AMP + diphosphate + H(+). In terms of biological role, catalyzes the attachment of threonine to tRNA(Thr) in a two-step reaction: L-threonine is first activated by ATP to form Thr-AMP and then transferred to the acceptor end of tRNA(Thr). Also edits incorrectly charged L-seryl-tRNA(Thr). This Sinorhizobium fredii (strain NBRC 101917 / NGR234) protein is Threonine--tRNA ligase.